The sequence spans 153 residues: 6,7-dimethyl-8-ribityllumazine synthase (153 aa).

5-amino-6-(D-ribitylamino)uracil is bound by residues Phe22, 56-58 (AFE), and 80-82 (AVI). (2S)-2-hydroxy-3-oxobutyl phosphate is bound at residue 85–86 (ST). His88 acts as the Proton donor in catalysis. Phe113 contacts 5-amino-6-(D-ribitylamino)uracil. Arg127 is a binding site for (2S)-2-hydroxy-3-oxobutyl phosphate.

It belongs to the DMRL synthase family.

It catalyses the reaction (2S)-2-hydroxy-3-oxobutyl phosphate + 5-amino-6-(D-ribitylamino)uracil = 6,7-dimethyl-8-(1-D-ribityl)lumazine + phosphate + 2 H2O + H(+). It functions in the pathway cofactor biosynthesis; riboflavin biosynthesis; riboflavin from 2-hydroxy-3-oxobutyl phosphate and 5-amino-6-(D-ribitylamino)uracil: step 1/2. Catalyzes the formation of 6,7-dimethyl-8-ribityllumazine by condensation of 5-amino-6-(D-ribitylamino)uracil with 3,4-dihydroxy-2-butanone 4-phosphate. This is the penultimate step in the biosynthesis of riboflavin. This chain is 6,7-dimethyl-8-ribityllumazine synthase, found in Clostridium novyi (strain NT).